The chain runs to 95 residues: Large ribosomal subunit protein bL27 (95 aa).

Positions 1 to 10 (MLLTMNLQLF) are excised as a propeptide. Residues 12 to 38 (HKKGGGSTSNGRDSESKRLGAKSADGQ) are disordered.

Belongs to the bacterial ribosomal protein bL27 family. The N-terminus is cleaved by ribosomal processing cysteine protease Prp.

In Enterococcus faecalis (strain ATCC 700802 / V583), this protein is Large ribosomal subunit protein bL27.